Reading from the N-terminus, the 356-residue chain is S-adenosylmethionine:tRNA ribosyltransferase-isomerase (356 aa).

The protein belongs to the QueA family. In terms of assembly, monomer.

It is found in the cytoplasm. It catalyses the reaction 7-aminomethyl-7-carbaguanosine(34) in tRNA + S-adenosyl-L-methionine = epoxyqueuosine(34) in tRNA + adenine + L-methionine + 2 H(+). Its pathway is tRNA modification; tRNA-queuosine biosynthesis. In terms of biological role, transfers and isomerizes the ribose moiety from AdoMet to the 7-aminomethyl group of 7-deazaguanine (preQ1-tRNA) to give epoxyqueuosine (oQ-tRNA). The sequence is that of S-adenosylmethionine:tRNA ribosyltransferase-isomerase from Escherichia coli (strain UTI89 / UPEC).